Reading from the N-terminus, the 178-residue chain is MNATPEKADDLIVVGKIFSVHGVRGEVKVYSFTDPIENLLDYPRWTLRHEGKVKQVELVSGRGSQKGLVVKLKGLDDRDEARLLSGYEICIPRSLLPNLAADEYYWYQLVGLKVINQDEQLFGKVDHMLETGANDVMVVKPCAGSLDDRERLLPYTEQCVLAIDLEAGVMRVEWDADF.

A PRC barrel domain is found at 101-178; sequence ADEYYWYQLV…VMRVEWDADF (78 aa).

It belongs to the RimM family. Binds ribosomal protein uS19.

The protein localises to the cytoplasm. Its function is as follows. An accessory protein needed during the final step in the assembly of 30S ribosomal subunit, possibly for assembly of the head region. Essential for efficient processing of 16S rRNA. May be needed both before and after RbfA during the maturation of 16S rRNA. It has affinity for free ribosomal 30S subunits but not for 70S ribosomes. This Pseudomonas putida (strain ATCC 700007 / DSM 6899 / JCM 31910 / BCRC 17059 / LMG 24140 / F1) protein is Ribosome maturation factor RimM.